The following is a 413-amino-acid chain: DNA primase large subunit PriL (413 aa).

4 residues coordinate [4Fe-4S] cluster: cysteine 230, cysteine 301, cysteine 310, and cysteine 317. 3 stretches are compositionally biased toward basic and acidic residues: residues 340–356, 362–381, and 388–413; these read MEKE…QEEK, KEKQ…EEKG, and KKRE…KKRI. The disordered stretch occupies residues 340 to 413; that stretch reads MEKEKEEKEE…KEKQEEKKRI (74 aa).

It belongs to the eukaryotic-type primase large subunit family. Heterodimer of a small subunit (PriS) and a large subunit (PriL). [4Fe-4S] cluster serves as cofactor.

In terms of biological role, regulatory subunit of DNA primase, an RNA polymerase that catalyzes the synthesis of short RNA molecules used as primers for DNA polymerase during DNA replication. Stabilizes and modulates the activity of the small subunit, increasing the rate of DNA synthesis, and conferring RNA synthesis capability. The DNA polymerase activity may enable DNA primase to also catalyze primer extension after primer synthesis. May also play a role in DNA repair. The protein is DNA primase large subunit PriL of Methanosarcina barkeri (strain Fusaro / DSM 804).